The sequence spans 471 residues: Threonine--tRNA ligase catalytic subunit (471 aa).

The catalytic stretch occupies residues 8–333 (THIDYAYELD…YLEHRRGRMP (326 aa)). Residues Cys112, His166, and His310 each contribute to the Zn(2+) site.

Belongs to the class-II aminoacyl-tRNA synthetase family. Homodimer. Probably interacts with its editing subunit. The cofactor is Zn(2+).

It localises to the cytoplasm. The enzyme catalyses tRNA(Thr) + L-threonine + ATP = L-threonyl-tRNA(Thr) + AMP + diphosphate + H(+). Functionally, catalyzes the attachment of threonine to tRNA(Thr) in a two-step reaction: L-threonine is first activated by ATP to form Thr-AMP and then transferred to the acceptor end of tRNA(Thr). This protein is probably not able to deacylate mischarged L-seryl-tRNA(Thr) as it lacks the appropriate domain. The protein is Threonine--tRNA ligase catalytic subunit of Aeropyrum pernix (strain ATCC 700893 / DSM 11879 / JCM 9820 / NBRC 100138 / K1).